A 241-amino-acid polypeptide reads, in one-letter code: Glucosamine-6-phosphate deaminase (241 aa).

Residue D67 is the Proton acceptor; for enolization step of the active site. N136 acts as the For ring-opening step in catalysis. H138 acts as the Proton acceptor; for ring-opening step in catalysis. E143 functions as the For ring-opening step in the catalytic mechanism.

Belongs to the glucosamine/galactosamine-6-phosphate isomerase family. NagB subfamily.

It carries out the reaction alpha-D-glucosamine 6-phosphate + H2O = beta-D-fructose 6-phosphate + NH4(+). It functions in the pathway amino-sugar metabolism; N-acetylneuraminate degradation; D-fructose 6-phosphate from N-acetylneuraminate: step 5/5. Functionally, catalyzes the reversible isomerization-deamination of glucosamine 6-phosphate (GlcN6P) to form fructose 6-phosphate (Fru6P) and ammonium ion. The sequence is that of Glucosamine-6-phosphate deaminase from Bacillus pumilus (strain SAFR-032).